A 342-amino-acid polypeptide reads, in one-letter code: Probable dual-specificity RNA methyltransferase RlmN (342 aa).

Glu91 (proton acceptor) is an active-site residue. The 231-residue stretch at 97–327 (YKHGNSICVS…TTIRREMGAD (231 aa)) folds into the Radical SAM core domain. The cysteines at positions 104 and 332 are disulfide-linked. [4Fe-4S] cluster is bound by residues Cys111, Cys115, and Cys118. Residues 158 to 159 (GE), Ser190, 213 to 215 (SLH), and Asn289 each bind S-adenosyl-L-methionine. The active-site S-methylcysteine intermediate is the Cys332.

The protein belongs to the radical SAM superfamily. RlmN family. [4Fe-4S] cluster serves as cofactor.

It is found in the cytoplasm. It catalyses the reaction adenosine(2503) in 23S rRNA + 2 reduced [2Fe-2S]-[ferredoxin] + 2 S-adenosyl-L-methionine = 2-methyladenosine(2503) in 23S rRNA + 5'-deoxyadenosine + L-methionine + 2 oxidized [2Fe-2S]-[ferredoxin] + S-adenosyl-L-homocysteine. The catalysed reaction is adenosine(37) in tRNA + 2 reduced [2Fe-2S]-[ferredoxin] + 2 S-adenosyl-L-methionine = 2-methyladenosine(37) in tRNA + 5'-deoxyadenosine + L-methionine + 2 oxidized [2Fe-2S]-[ferredoxin] + S-adenosyl-L-homocysteine. In terms of biological role, specifically methylates position 2 of adenine 2503 in 23S rRNA and position 2 of adenine 37 in tRNAs. The protein is Probable dual-specificity RNA methyltransferase RlmN of Clostridium botulinum (strain Loch Maree / Type A3).